Reading from the N-terminus, the 541-residue chain is MAKSLLFGEQARRSMEAGVDKLADTVRVTLGPKGRNVVLDKKFGSPLITNDGVTIAREIELEDPYENMGAQLVKEVATKTNDVAGDGTTTATLLAQAIIREGLKNVTAGANPIQIRTGIRKAVEKAVEEIKVISKPVNGKEDIARVAAISAASEEVGKLIADAMERVGNDGVITVEESKSMGTDLEVVEGMQFDRGYVSAYMVTDTEKMEAVLDDVYILITDKKISNIQEILPILEQIVQQGKKLLIISEDIEGEALSTLVLNKLRGTFTCVGVKAPGFGDRRKEMLQDIAILTGGEVISEELGRDLKDVTIDMLGTADSVKVTKENTTIVNGKGDKVAIKERVSQIRVQIEDTTSEFDKEKLQERLAKLAGGVAVIRVGAATETELKEEKLRIEDALAATKAAVEEGIVPGGGTAYIDIIPKIADLTSDIIDVKLGIDIIRKALEEPVRQIANNAGAEGSVIIEKVKASEAGVGYDALNDKYVDMLKTGIVDPTKVTRSALQNAASIASTFLTTEAAVADIPEKENTPPMAPGMGMDGMY.

ATP-binding positions include 29-32 (TLGP), 86-90 (DGTTT), Gly413, 477-479 (DAL), and Asp493.

It belongs to the chaperonin (HSP60) family. In terms of assembly, forms a cylinder of 14 subunits composed of two heptameric rings stacked back-to-back. Interacts with the co-chaperonin GroES.

It is found in the cytoplasm. The catalysed reaction is ATP + H2O + a folded polypeptide = ADP + phosphate + an unfolded polypeptide.. Its function is as follows. Together with its co-chaperonin GroES, plays an essential role in assisting protein folding. The GroEL-GroES system forms a nano-cage that allows encapsulation of the non-native substrate proteins and provides a physical environment optimized to promote and accelerate protein folding. The chain is Chaperonin GroEL from Clostridium botulinum (strain Loch Maree / Type A3).